Here is a 2368-residue protein sequence, read N- to C-terminus: MESHVKYLDELILAIKDLNSGVDSKVQIKKVPTDPSSSQEYAKSLKILNTLIRNLKDQRRNNIMKNDTIFSKTVSALALLLEYNPFLLVMKDSNGNFEIQRLIDDFLNISVLNYDNYHRIWFMRRKLGSWCKACVEFYGKPAKFQLTAHFENTMNLYEQALTEVLLGKTELLKFYDTLKGLYILLYWFTSEYSTFGNSIAFLDSSLGFTKFDFNFQRLIRIVLYVFDSCELAALEYAEIQLKYISLVVDYVCNRTISTALDAPALVCCEQLKFVLTTMHHFLDNKYGLLDNDPTMAKGILRLYSLCISNDFSKCFVDHFPIDQWADFSQSEHFPFTQLTNKALSIVYFDLKRRSLPVEALKYDNKFNIWVYQSEPDSSLKNVTSPFDDRYKQLEKLRLLVLKKFNKTERGTLLKYRVNQLSPGFFQRAGNDFKLILNEASVSIQTCFKTNNITRLTSWTVILGRLACLESEKFSGTLPNSTKDMDNWYVCHLCDIEKTGNPFVRINPNRPEAAGKSEIFRILHSNFLSHPNIDEFSESLLSGILFSLHRIFSHFQPPKLTDGNGQINKSFKLVQKCFMNSNRYLRLLSTRIIPLFNISDSHNSEDEHTATLIKFLQSQKLPVVKENLVIAWTQLTLTTSNDVFDTLLLKLIDIFNSDDYSLRIMMTLQIKNMAKILKKTPYQLLSPILPVLLRQLGKNLVERKVGFQNLIELLGYSSKTILDIFQRYIIPYAIIQYKSDVLSEIAKIMCDGDTSLINQMKVNLLKKNSRQIFAVALVKHGLFSLDILETLFLNRAPTFDKGYITAYLPDYKTLAEITKLYKNSVTKDASDSENANMILCSLRFLITNFEKDKRHGSKYKNINNWTDDQEQAFQKKLQDNILGIFQVFSSDIHDVEGRTTYYEKLRVINGISFLIIYAPKKSIISALAQISICLQTGLGLKEVRYEAFRCWHLLVRHLNDEELSTVIDSLIAFILQKWSEFNGKLRNIVYSILDTLIKEKSDLILKLKPYTTLALVGKPELGILARDGQFARMVNKIRSTTDLIPIFANNLKSSNKYVINQNLDDIEVYLRRKQTERSIDFTPKKVGQTSDITLVLGALLDTSHKFRNLDKDLCEKCAKCISMIGVLDVTKHEFKRTTYSENEVYDLNDSVQTIKFLIWVINDILVPAFWQSENPSKQLFVALVIQESLKYCGLSSESWDMNHKELYPNEAKLWEKFNSVSKTTIYPLLSSLYLAQSWKEYVPLKYPSNNFKEGYKIWVKRFTLDLLKTGTTENHPLHVFSSLIREDDGSLSNFLLPYISLDIIIKAEKGTPYADILNGIIIEFDSIFTCNLEGMNNLQVDSLRMCYESIFRVFEYCKKWATEFKQNYSKLHGTFIIKDTKTTNMLLRIDEFLRTTPSDLLAQRSLETDSFERSALYLEQCYRQNPHDKNQNGQLLKNLQITYEEIGDIDSLDGVLRTFATGNLVSKIEELQYSENWKLAQDCFNVLGKFSDDPKTTTRMLKSMYDHQLYSQIISNSSFHSSDGKISLSPDVKEWYSIGLEAANLEGNVQTLKNWVEQIESLRNIDDREVLLQYNIAKALIAISNEDPLRTQKYIHNSFRLIGTNFITSSKETTLLKKQNLLMKLHSLYDLSFLSSAKDKFEYKSNTTILDYRMERIGADFVPNHYILSMRKSFDQLKMNEQADADLGKTFFTLAQLARNNARLDIASESLMHCLERRLPQAELEFAEILWKQGENDRALKIVQEIHEKYQENSSVNARDRAAVLLKFTEWLDLSNNSASEQIIKQYQDIFQIDSKWDKPYYSIGLYYSRLLERKKAEGYITNGRFEYRAISYFLLAFEKNTAKVRENLPKVITFWLDIAAASISEAPGNRKEMLSKATEDICSHVEEALQHCPTYIWYFVLTQLLSRLLHSHQSSAQIIMHILLSLAVEYPSHILWYITALVNSNSSKRVLRGKHILEKYRQHSQNPHDLVSSALDLTKALTRVCLQDVKSITSRSGKSLEKDFKFDMNVAPSAMVVPVRKNLDIISPLESNSMRGYQPFRPVVSIIRFGSSYKVFSSLKKPKQLNIIGSDGNIYGIMCKKEDVRQDNQYMQFATTMDFLLSKDIASRKRSLGINIYSVLSLREDCGILEMVPNVVTLRSILSTKYESLKIKYSLKSLHDRWQHTAVDGKLEFYMEQVDKFPPILYQWFLENFPDPINWFNARNTYARSYAVMAMVGHILGLGDRHCENILLDIQTGKVLHVDFDCLFEKGKRLPVPEIVPFRLTPNLLDALGIIGTEGTFKKSSEVTLALMRKNEVALMNVIETIMYDRNMDHSIQKALKVLRNKIRGIDPQDGLVLSVAGQTETLIQEATSEDNLSKMYIGWLPFW.

In terms of domain architecture, FAT spans 1399–1944 (LLAQRSLETD…LWYITALVNS (546 aa)). Residues 2049-2352 (FGSSYKVFSS…QTETLIQEAT (304 aa)) enclose the PI3K/PI4K catalytic domain. The G-loop stretch occupies residues 2055 to 2061 (VFSSLKK). The binding to the RPA complex stretch occupies residues 2140–2368 (SILSTKYESL…KMYIGWLPFW (229 aa)). The interval 2221–2229 (GLGDRHCEN) is catalytic loop. Residues 2241 to 2265 (HVDFDCLFEKGKRLPVPEIVPFRLT) form an activation loop region. Residues 2336–2368 (LVLSVAGQTETLIQEATSEDNLSKMYIGWLPFW) enclose the FATC domain.

It belongs to the PI3/PI4-kinase family. ATM subfamily. In terms of assembly, interacts with LCD1, which is required for localization MEC1 to the RPA complex. Interacts directly with the RPA subunits RFA1 and RFA2.

It localises to the nucleus. The enzyme catalyses L-seryl-[protein] + ATP = O-phospho-L-seryl-[protein] + ADP + H(+). The catalysed reaction is L-threonyl-[protein] + ATP = O-phospho-L-threonyl-[protein] + ADP + H(+). Functionally, serine/threonine protein kinase which activates checkpoint signaling upon genotoxic stresses such as ionizing radiation (IR), ultraviolet light (UV), or DNA replication stalling, thereby acting as a DNA damage sensor. Recognizes the substrate consensus sequence [ST]-Q. Recruited in complex with protein LCD1 by the single-strand-binding protein complex RPA to DNA lesions in order to initiate the DNA repair by homologous recombination, after the MRX-complex and TEL1 are displaced. Phosphorylates LCD1 and RPA2, a subunit of RPA, involved in DNA replication, repair and recombination. Phosphorylates RAD9, CHK1 and RAD53, which leads to the activation of the CHK1 and RAD53 kinases involved in DNA damage repair cascade. Phosphorylates histone H2A to form H2AS128ph (gamma-H2A) at sites of DNA damage, also involved in the regulation of DNA damage response mechanism. Also phosphorylates SLX4 and RTT107 which are proteins involved in genome stability. Required for cell growth and meiotic recombination. This is Serine/threonine-protein kinase MEC1 (MEC1) from Saccharomyces cerevisiae (strain ATCC 204508 / S288c) (Baker's yeast).